A 68-amino-acid polypeptide reads, in one-letter code: Protein SlyX homolog (68 aa).

Belongs to the SlyX family.

The protein is Protein SlyX homolog of Pseudomonas putida (strain GB-1).